The sequence spans 132 residues: Agouti-signaling protein (132 aa).

An N-terminal signal peptide occupies residues 1–22; that stretch reads MDVTRLLLATLLVFLCFFTAYS. The N-linked (GlcNAc...) asparagine glycan is linked to Asn39. The tract at residues 58–88 is disordered; the sequence is KSKQMSRKEAEKKRSSKKEASMKKVARPRTP. The segment covering 63–79 has biased composition (basic and acidic residues); the sequence is SRKEAEKKRSSKKEASM. 5 disulfide bridges follow: Cys93–Cys108, Cys100–Cys114, Cys107–Cys125, Cys111–Cys132, and Cys116–Cys123. Residues 93–132 form the Agouti domain; sequence CVATRDSCKPPAPACCDPCASCQCRFFRSACSCRVLSLNC.

It localises to the secreted. Its function is as follows. Involved in the regulation of melanogenesis. The binding of ASP to MC1R precludes alpha-MSH initiated signaling and thus blocks production of cAMP, leading to a down-regulation of eumelanogenesis (brown/black pigment) and thus increasing synthesis of pheomelanin (yellow/red pigment). In Cercopithecus mitis (Blue monkey), this protein is Agouti-signaling protein (ASIP).